The chain runs to 435 residues: Mitogen-activated protein kinase HOG1 (435 aa).

Thr2 carries the N-acetylthreonine modification. The Protein kinase domain maps to 23–302; sequence YNDLNPVGMG…AADALAHPYS (280 aa). ATP is bound by residues 29–37 and Lys52; that span reads VGMGAFGLV. Asp144 acts as the Proton acceptor in catalysis. Arsenite is bound by residues Cys156 and Cys161. Residue Thr174 is modified to Phosphothreonine; by PBS2. The TXY motif lies at 174–176; the sequence is TGY. A Phosphotyrosine; by PBS2 modification is found at Tyr176. Residue Cys205 participates in arsenite binding.

This sequence belongs to the protein kinase superfamily. Ser/Thr protein kinase family. MAP kinase subfamily. HOG1 sub-subfamily. Interacts with CDC37, HOT1, KIN28, PTP2, PTP3, RBP1, RCK2, RPD3, SIC1, SMP1 and SIN4. It depends on Mg(2+) as a cofactor. Post-translationally, activated by PBS2-mediated concomitant phosphorylation at Thr-174 and Tyr-176. Dually phosphorylated on Thr-174 and Tyr-176, which activates the enzyme.

The protein resides in the cytoplasm. Its subcellular location is the nucleus. The enzyme catalyses L-seryl-[protein] + ATP = O-phospho-L-seryl-[protein] + ADP + H(+). The catalysed reaction is L-threonyl-[protein] + ATP = O-phospho-L-threonyl-[protein] + ADP + H(+). With respect to regulation, activated by tyrosine and threonine phosphorylation. Inactivated by dephosphorylation via recruitment of PTC1 to the PBS2-HOG1 complex after adaptation to osmotic stress. PTP2 and PTP3 inactivate HOG1 by dephosphorylating Tyr-176, while the PP2Cs PTC1 and PTC2 or PTC3 dephosphorylate Thr-174 in the activation loop. In terms of biological role, proline-directed serine/threonine-protein kinase involved in a signal transduction pathway that is activated by changes in the osmolarity of the extracellular environment. Controls osmotic regulation of transcription via the stress response element (STRE) in promoters of target genes. Upon osmotic shock, associates with the SKO1-SSN6-TUP1 complex, phosphorylates SKO1, and converts it into an activator that subsequently recruits Swi/Snf and SAGA complexes. Activates the SMP1 transcription factor and the RCK2 kinase, both also involved in the regulation of the expression of a subset of osmotic stress-related genes. Phosphorylation of HSL1 by HOG1 leads to a G2 arrest essential for cell survival at high osmolarity. Also mediates cell-cycle arrest in G1 phase by the dual targeting of SIC1. Phosphorylates methyltransferase DOT1 at least on 'Ser-565' and 'Thr-576'. Regulates MFA2 ARE-mediated translation in response to carbon source. Targets RPD3 histone deacetylase to osmoresponsive promoters to induce gene expression on stress. Required for the Golgi apparatus localization of MNN1. Plays an essential role in maintaining water homeostasis, arsenite detoxification, copper-resistance, cold-resistance, hydrogen peroxide response, adaptation to citric acid stress, and repression of the mating pathway activity. Functions as an arsenic sensor and effector via direct binding to arsenic and subsequent phosphorylation of the ARR1 transcription factor. This is Mitogen-activated protein kinase HOG1 (HOG1) from Saccharomyces cerevisiae (strain ATCC 204508 / S288c) (Baker's yeast).